The following is a 141-amino-acid chain: Succinate dehydrogenase [ubiquinone] cytochrome b small subunit 2 (141 aa).

A mitochondrion-targeting transit peptide spans 1-24; that stretch reads MSLIRCTTSKALKFRQLLKMAART. Topologically, residues 25-44 are mitochondrial matrix; that stretch reads SVTTPVSREPFSIEDHSLHF. The chain crosses the membrane as a helical span at residues 45–63; sequence KIERYWAAGMIPLIPTAYF. Residues 64–68 lie on the Mitochondrial intermembrane side of the membrane; that stretch reads IHTPA. The chain crosses the membrane as a helical span at residues 69–89; the sequence is MDAVLTVAIVLHVHWGIAGVV. Histidine 80 is a binding site for heme b. Topologically, residues 90-104 are mitochondrial matrix; sequence SDYARPFVIGDTLAR. An a ubiquinone-binding site is contributed by tyrosine 92. The chain crosses the membrane as a helical span at residues 105–126; sequence VARASVYIITVILLASLLHFNN. The Mitochondrial intermembrane segment spans residues 127–141; that stretch reads SDVGLTKAFEMVWSL.

This sequence belongs to the CybS family. In terms of assembly, component of the mitochondrial electron transport chain complex II composed of four subunits: a flavoprotein (Fp), an iron-sulfur protein (Ip), and a large cytochrome b (CybL) subunit and a small cytochrome b (CybS) subunit. There are 2 developmental stage-specific forms of complex II which have the Ip and CybL subunits in common. Complex II from the free-living larvae (aerobic environment) acts as a succinate dehydrogenase and is composed of the common subunit Ip and CybL and the stage specific subunits FpL and CybSL. Complex II from parasitic larvae and adults (anaerobic environment) acts as a fumarate reductase and is composed of the common subunit Ip and CybL and the stage specific subunits FpA and CybSA. Heme b is required as a cofactor.

Its subcellular location is the mitochondrion inner membrane. The protein operates within carbohydrate metabolism; tricarboxylic acid cycle; fumarate from succinate (eukaryal route): step 1/1. Its function is as follows. Membrane-bound small subunit (CybS) of the mitochondrial electron transport chain complex II, which together with the membrane-bound large subunit (CybL), anchor the catalytic subunits to the inner mitochondria membrane. During the free-living egg-larvae stages, which occur in an aerobic environment, complex II acts as a succinate dehydrogenase by transferring electrons from succinate to ubiquinone. The chain is Succinate dehydrogenase [ubiquinone] cytochrome b small subunit 2 from Ascaris suum (Pig roundworm).